Consider the following 284-residue polypeptide: Bifunctional protein FolD 1 (284 aa).

NADP(+) contacts are provided by residues 166 to 168 (GAS) and Ile-232.

The protein belongs to the tetrahydrofolate dehydrogenase/cyclohydrolase family. Homodimer.

The enzyme catalyses (6R)-5,10-methylene-5,6,7,8-tetrahydrofolate + NADP(+) = (6R)-5,10-methenyltetrahydrofolate + NADPH. It carries out the reaction (6R)-5,10-methenyltetrahydrofolate + H2O = (6R)-10-formyltetrahydrofolate + H(+). It participates in one-carbon metabolism; tetrahydrofolate interconversion. Its function is as follows. Catalyzes the oxidation of 5,10-methylenetetrahydrofolate to 5,10-methenyltetrahydrofolate and then the hydrolysis of 5,10-methenyltetrahydrofolate to 10-formyltetrahydrofolate. The polypeptide is Bifunctional protein FolD 1 (Pseudomonas syringae pv. syringae (strain B728a)).